Reading from the N-terminus, the 257-residue chain is Exosome complex component Rrp4 (257 aa).

The S1 motif domain occupies 65 to 137; that stretch reads GDNVLGKIVD…EVNQIDLTTK (73 aa). A KH domain is found at 147 to 206; it reads RGGQLVTITPSKVPRLIGKGGSMINMIKTLTGTRIIVGQNGWVWVSGKNDELERLAIEAI.

It belongs to the RRP4 family. In terms of assembly, component of the archaeal exosome complex. Forms a trimer of Rrp4 and/or Csl4 subunits. The trimer associates with a hexameric ring-like arrangement composed of 3 Rrp41-Rrp42 heterodimers.

It localises to the cytoplasm. Non-catalytic component of the exosome, which is a complex involved in RNA degradation. Increases the RNA binding and the efficiency of RNA degradation. Confers strong poly(A) specificity to the exosome. In Thermococcus kodakarensis (strain ATCC BAA-918 / JCM 12380 / KOD1) (Pyrococcus kodakaraensis (strain KOD1)), this protein is Exosome complex component Rrp4.